The sequence spans 208 residues: Ribonuclease HII (208 aa).

One can recognise an RNase H type-2 domain in the interval 13-202 (DLVAGVDEVG…VRQAYEAREA (190 aa)). Residues aspartate 19, glutamate 20, and aspartate 111 each contribute to the a divalent metal cation site.

It belongs to the RNase HII family. Mn(2+) is required as a cofactor. Requires Mg(2+) as cofactor.

It is found in the cytoplasm. The enzyme catalyses Endonucleolytic cleavage to 5'-phosphomonoester.. In terms of biological role, endonuclease that specifically degrades the RNA of RNA-DNA hybrids. The polypeptide is Ribonuclease HII (Pseudomonas fluorescens (strain ATCC BAA-477 / NRRL B-23932 / Pf-5)).